The following is a 221-amino-acid chain: Large ribosomal subunit protein uL16y (221 aa).

Belongs to the universal ribosomal protein uL16 family. In terms of assembly, component of the small ribosomal subunit. Mature ribosomes consist of a small (40S) and a large (60S) subunit. The 40S subunit contains about 33 different proteins and 1 molecule of RNA (18S). The 60S subunit contains about 49 different proteins and 3 molecules of RNA (25S, 5.8S and 5S).

The protein is Large ribosomal subunit protein uL16y (RPL10B) of Arabidopsis thaliana (Mouse-ear cress).